The sequence spans 378 residues: Myoglobin (378 aa).

Position 332 (His-332) interacts with heme.

This sequence belongs to the indoleamine 2,3-dioxygenase family. In terms of assembly, homodimer. Heme serves as cofactor.

Serves a reserve supply of oxygen and facilitates the movement of oxygen within muscles. This Haliotis madaka (Giant abalone) protein is Myoglobin.